Here is a 250-residue protein sequence, read N- to C-terminus: MALHLGVITLLPEIIQGIHYGVTGRAIEQGLVKIDCWNPRDWSSRPYKQVDDKPYGGGPGMVMMYEPLHAAIKHARSEMKENCKTIYLSPQGKVVRQNDLKQIAIQKQSLLFVAGRYEGIDERIINHHIDEEWSLGDFVLSGGELAAMVFIDAIIRLIPGSLGHLGSAEQDSFMNGLLDCPHYTRPATINGLDVPDVLLGGNHKEIERWRRKQSLGKTWLKRPDLLEKIQLSETDKQLLAEFKCEHGDSC.

Residues Gly115 and Leu135–Leu140 each bind S-adenosyl-L-methionine.

Belongs to the RNA methyltransferase TrmD family. As to quaternary structure, homodimer.

The protein localises to the cytoplasm. It carries out the reaction guanosine(37) in tRNA + S-adenosyl-L-methionine = N(1)-methylguanosine(37) in tRNA + S-adenosyl-L-homocysteine + H(+). Specifically methylates guanosine-37 in various tRNAs. The chain is tRNA (guanine-N(1)-)-methyltransferase from Legionella pneumophila (strain Paris).